The sequence spans 284 residues: MLIIETLPLLRQHIRRLRQEGKRVALVPTMGNLHDGHMKLVDEAKARADVVFVSIFVNPMQFDRPDDLVRYPRTLQEDCEKLNKRKVDYVFAPAVEEIYPQGLEGQTYVDVPGLSTMLEGASRPGHFRGVSTIVSKLFNLIQPDIACFGEKDFQQLALIRKMVADMSYDIEIVGVPIIRAKDGLALSSRNSYLTAEQRKIAPGLHNVMNSIAEKLIAGNRELQEIIAIAEQELNEKGFRADDIQIRDADTLLELTETSKRAVILAAAWLGQARLIDNQSVTLAQ.

Methionine 30 to histidine 37 is an ATP binding site. The Proton donor role is filled by histidine 37. Glutamine 61 is a binding site for (R)-pantoate. Residue glutamine 61 participates in beta-alanine binding. Glycine 149–aspartate 152 is a binding site for ATP. Glutamine 155 lines the (R)-pantoate pocket. Residues isoleucine 178 and leucine 186–arginine 189 contribute to the ATP site.

This sequence belongs to the pantothenate synthetase family. Homodimer.

The protein localises to the cytoplasm. It catalyses the reaction (R)-pantoate + beta-alanine + ATP = (R)-pantothenate + AMP + diphosphate + H(+). It functions in the pathway cofactor biosynthesis; (R)-pantothenate biosynthesis; (R)-pantothenate from (R)-pantoate and beta-alanine: step 1/1. Functionally, catalyzes the condensation of pantoate with beta-alanine in an ATP-dependent reaction via a pantoyl-adenylate intermediate. The chain is Pantothenate synthetase from Salmonella paratyphi B (strain ATCC BAA-1250 / SPB7).